A 322-amino-acid chain; its full sequence is uncharacterized protein (322 aa).

2 disordered regions span residues 1 to 51 and 107 to 130; these read MARS…GAWA and QERQNVEGGPEGLHLEPGNEDRPD. Residues 119–130 show a composition bias toward basic and acidic residues; the sequence is LHLEPGNEDRPD.

Expressed in skin and fetal lung.

This is an uncharacterized protein from Homo sapiens (Human).